The sequence spans 460 residues: Cysteine--tRNA ligase (460 aa).

C28 contacts Zn(2+). A 'HIGH' region motif is present at residues M30 to H40. C209, H234, and E238 together coordinate Zn(2+). The 'KMSKS' region signature appears at K266–S270. Residue K269 coordinates ATP.

This sequence belongs to the class-I aminoacyl-tRNA synthetase family. In terms of assembly, monomer. The cofactor is Zn(2+).

The protein localises to the cytoplasm. It carries out the reaction tRNA(Cys) + L-cysteine + ATP = L-cysteinyl-tRNA(Cys) + AMP + diphosphate. This chain is Cysteine--tRNA ligase, found in Pseudomonas putida (strain ATCC 700007 / DSM 6899 / JCM 31910 / BCRC 17059 / LMG 24140 / F1).